A 242-amino-acid chain; its full sequence is RNA polymerase sigma factor for flagellar operon (242 aa).

The Polymerase core binding motif lies at Asp55–Gly68. Residues Leu211 to Lys230 constitute a DNA-binding region (H-T-H motif).

The protein belongs to the sigma-70 factor family.

In terms of biological role, sigma factors are initiation factors that promote the attachment of RNA polymerase to specific initiation sites and are then released. This alternative sigma factor is specific for the flagellin gene (fliC) expression. In Vibrio parahaemolyticus serotype O3:K6 (strain RIMD 2210633), this protein is RNA polymerase sigma factor for flagellar operon (lafS).